Consider the following 647-residue polypeptide: Threonine--tRNA ligase (647 aa).

The TGS domain occupies 1–61 (MINITFPDGA…TEDGSIEIVT (61 aa)). The tract at residues 242 to 540 (DHRKLGKELD…LIENYKGAFP (299 aa)) is catalytic. 3 residues coordinate Zn(2+): Cys336, His387, and His517.

It belongs to the class-II aminoacyl-tRNA synthetase family. As to quaternary structure, homodimer. Zn(2+) serves as cofactor.

It is found in the cytoplasm. The catalysed reaction is tRNA(Thr) + L-threonine + ATP = L-threonyl-tRNA(Thr) + AMP + diphosphate + H(+). Functionally, catalyzes the attachment of threonine to tRNA(Thr) in a two-step reaction: L-threonine is first activated by ATP to form Thr-AMP and then transferred to the acceptor end of tRNA(Thr). Also edits incorrectly charged L-seryl-tRNA(Thr). The chain is Threonine--tRNA ligase from Streptococcus pneumoniae (strain ATCC 700669 / Spain 23F-1).